The sequence spans 403 residues: 8-amino-7-oxononanoate synthase (403 aa).

Substrate is bound at residue R30. Residue 121–122 coordinates pyridoxal 5'-phosphate; it reads GY. A substrate-binding site is contributed by H146. Residues S192, H220, and T248 each coordinate pyridoxal 5'-phosphate. N6-(pyridoxal phosphate)lysine is present on K251. T367 is a substrate binding site.

This sequence belongs to the class-II pyridoxal-phosphate-dependent aminotransferase family. BioF subfamily. In terms of assembly, homodimer. Requires pyridoxal 5'-phosphate as cofactor.

It catalyses the reaction 6-carboxyhexanoyl-[ACP] + L-alanine + H(+) = (8S)-8-amino-7-oxononanoate + holo-[ACP] + CO2. The protein operates within cofactor biosynthesis; biotin biosynthesis. In terms of biological role, catalyzes the decarboxylative condensation of pimeloyl-[acyl-carrier protein] and L-alanine to produce 8-amino-7-oxononanoate (AON), [acyl-carrier protein], and carbon dioxide. This is 8-amino-7-oxononanoate synthase from Burkholderia vietnamiensis (strain G4 / LMG 22486) (Burkholderia cepacia (strain R1808)).